Here is an 864-residue protein sequence, read N- to C-terminus: Leucine--tRNA ligase (864 aa).

A 'HIGH' region motif is present at residues 42–52; that stretch reads PYPSGKLHMGH. The 'KMSKS' region motif lies at 624–628; sequence KMSKS. Position 627 (lysine 627) interacts with ATP.

This sequence belongs to the class-I aminoacyl-tRNA synthetase family.

It is found in the cytoplasm. The catalysed reaction is tRNA(Leu) + L-leucine + ATP = L-leucyl-tRNA(Leu) + AMP + diphosphate. This Burkholderia pseudomallei (strain 1710b) protein is Leucine--tRNA ligase.